The primary structure comprises 449 residues: Bifunctional protein GlmU (449 aa).

Residues 1-226 (MVAVAILAAG…FQEISGINDR (226 aa)) form a pyrophosphorylase region. UDP-N-acetyl-alpha-D-glucosamine-binding positions include 7 to 10 (LAAG), K21, Q73, and 78 to 79 (GT). Residue D103 participates in Mg(2+) binding. Residues G140, E155, N170, and N224 each coordinate UDP-N-acetyl-alpha-D-glucosamine. Residue N224 participates in Mg(2+) binding. A linker region spans residues 227 to 247 (FQLSAAYEILQDRIKEKWMKA). The N-acetyltransferase stretch occupies residues 248–449 (GVMIHQPDTV…KEIKGWRLQS (202 aa)). Positions 329 and 347 each coordinate UDP-N-acetyl-alpha-D-glucosamine. Residue H359 is the Proton acceptor of the active site. 2 residues coordinate UDP-N-acetyl-alpha-D-glucosamine: Y362 and N373. Residues A376, 382–383 (NY), A419, and R436 each bind acetyl-CoA.

It in the N-terminal section; belongs to the N-acetylglucosamine-1-phosphate uridyltransferase family. In the C-terminal section; belongs to the transferase hexapeptide repeat family. In terms of assembly, homotrimer. Mg(2+) serves as cofactor.

It is found in the cytoplasm. It carries out the reaction alpha-D-glucosamine 1-phosphate + acetyl-CoA = N-acetyl-alpha-D-glucosamine 1-phosphate + CoA + H(+). The catalysed reaction is N-acetyl-alpha-D-glucosamine 1-phosphate + UTP + H(+) = UDP-N-acetyl-alpha-D-glucosamine + diphosphate. Its pathway is nucleotide-sugar biosynthesis; UDP-N-acetyl-alpha-D-glucosamine biosynthesis; N-acetyl-alpha-D-glucosamine 1-phosphate from alpha-D-glucosamine 6-phosphate (route II): step 2/2. The protein operates within nucleotide-sugar biosynthesis; UDP-N-acetyl-alpha-D-glucosamine biosynthesis; UDP-N-acetyl-alpha-D-glucosamine from N-acetyl-alpha-D-glucosamine 1-phosphate: step 1/1. It participates in bacterial outer membrane biogenesis; LPS lipid A biosynthesis. Its function is as follows. Catalyzes the last two sequential reactions in the de novo biosynthetic pathway for UDP-N-acetylglucosamine (UDP-GlcNAc). The C-terminal domain catalyzes the transfer of acetyl group from acetyl coenzyme A to glucosamine-1-phosphate (GlcN-1-P) to produce N-acetylglucosamine-1-phosphate (GlcNAc-1-P), which is converted into UDP-GlcNAc by the transfer of uridine 5-monophosphate (from uridine 5-triphosphate), a reaction catalyzed by the N-terminal domain. The chain is Bifunctional protein GlmU from Picosynechococcus sp. (strain ATCC 27264 / PCC 7002 / PR-6) (Agmenellum quadruplicatum).